The chain runs to 311 residues: Pyrimidine-specific ribonucleoside hydrolase RihA (311 aa).

Histidine 240 is a catalytic residue.

The protein belongs to the IUNH family. RihA subfamily.

Hydrolyzes cytidine or uridine to ribose and cytosine or uracil, respectively. The chain is Pyrimidine-specific ribonucleoside hydrolase RihA from Salmonella dublin (strain CT_02021853).